The sequence spans 547 residues: Putative cysteine ligase BshC (547 aa).

The stretch at 462-484 (NLAEENLDRVIAQARFLRQKVEH) forms a coiled coil.

This sequence belongs to the BshC family.

Its function is as follows. Involved in bacillithiol (BSH) biosynthesis. May catalyze the last step of the pathway, the addition of cysteine to glucosamine malate (GlcN-Mal) to generate BSH. The polypeptide is Putative cysteine ligase BshC (Heliobacterium modesticaldum (strain ATCC 51547 / Ice1)).